The following is a 539-amino-acid chain: Heparanase-like protein 2 (539 aa).

A signal peptide spans 1–21 (MGFNVVVFLSCLLLLPPVTFG). N-linked (GlcNAc...) asparagine glycans are attached at residues Asn143, Asn163, and Asn181. Glu198 serves as the catalytic Proton donor. Residue Asn300 is glycosylated (N-linked (GlcNAc...) asparagine). Catalysis depends on Glu316, which acts as the Nucleophile. Asn421 is a glycosylation site (N-linked (GlcNAc...) asparagine).

The protein belongs to the glycosyl hydrolase 79 family.

The protein resides in the lysosome membrane. Its subcellular location is the secreted. Functionally, endoglycosidase which is a cell surface and extracellular matrix-degrading enzyme. Cleaves heparan sulfate proteoglycans (HSPGs) into heparan sulfate side chains and core proteoglycans. In Arabidopsis thaliana (Mouse-ear cress), this protein is Heparanase-like protein 2.